The sequence spans 22 residues: Cysteine-rich venom protein collettin-a (22 aa).

Residues 1–15 (SNKKNYQKEIVDKHN) are compositionally biased toward basic and acidic residues. Residues 1–22 (SNKKNYQKEIVDKHNALRRSVK) are disordered.

The protein belongs to the CRISP family. Post-translationally, contains 8 disulfide bonds. As to expression, expressed by the venom gland.

The protein resides in the secreted. In Pseudechis colletti (Collett's snake), this protein is Cysteine-rich venom protein collettin-a.